A 233-amino-acid polypeptide reads, in one-letter code: Small ribosomal subunit protein uS2 (233 aa).

This sequence belongs to the universal ribosomal protein uS2 family.

The polypeptide is Small ribosomal subunit protein uS2 (Clostridium perfringens (strain ATCC 13124 / DSM 756 / JCM 1290 / NCIMB 6125 / NCTC 8237 / Type A)).